The primary structure comprises 501 residues: Glucose-6-phosphate exchanger SLC37A2 (501 aa).

A helical transmembrane segment spans residues 19–39 (SWFRGLILLLTFLIYACYHMS). N-linked (GlcNAc...) asparagine glycosylation is found at N53, N62, and N68. 5 helical membrane passes run 88-108 (GGVD…SGVF), 118-138 (LSAG…GYFW), 145-165 (YFVV…PSVV), 189-209 (SVGN…QWGL), and 210-230 (SFIV…LFLI). The disordered stretch occupies residues 240–262 (PPQHHGEPAENQDNPEDPGNSPC). 6 helical membrane-spanning segments follow: residues 302–322 (LCLL…PLYI), 334–354 (GDLS…AGLV), 362–382 (ATTC…YNYI), 391–411 (IVML…ITTA), 434–454 (AIID…AGLI), and 462–482 (VFYM…RLVY).

Belongs to the major facilitator superfamily. Organophosphate:Pi antiporter (OPA) (TC 2.A.1.4) family. Detected in intestine and pancreas. Lower expression is also detected in liver and kidney.

The protein resides in the endoplasmic reticulum membrane. It carries out the reaction D-glucose 6-phosphate(in) + phosphate(out) = D-glucose 6-phosphate(out) + phosphate(in). Inhibited by vanadate but not by chlorogenic acid. In terms of biological role, inorganic phosphate and glucose-6-phosphate antiporter. May transport cytoplasmic glucose-6-phosphate into the lumen of the endoplasmic reticulum and translocate inorganic phosphate into the opposite direction. Independent of a lumenal glucose-6-phosphatase. May not play a role in homeostatic regulation of blood glucose levels. The sequence is that of Glucose-6-phosphate exchanger SLC37A2 from Homo sapiens (Human).